Reading from the N-terminus, the 792-residue chain is Glucocorticoid receptor (792 aa).

The segment covering 1 to 15 has biased composition (basic and acidic residues); the sequence is MDSKESLAPPGRDEV. The interval 1 to 25 is disordered; the sequence is MDSKESLAPPGRDEVPSSLLGRGRG. The tract at residues 1–436 is modulating; sequence MDSKESLAPP…STATGPPPKL (436 aa). Position 24 is an omega-N-methylarginine (R24). Position 46 is a phosphoserine (S46). Residues 67–98 form a disordered region; sequence SKGSASNAQQQQQQQQQQQQQQQQQPQPDLSK. A compositionally biased stretch (low complexity) spans 75-94; it reads QQQQQQQQQQQQQQQQQPQP. Residues S131, S152, and S159 each carry the phosphoserine modification. The segment covering 148–162 has biased composition (polar residues); that stretch reads NRSTSRPENPKSSTP. Residues 148 to 201 form a disordered region; sequence NRSTSRPENPKSSTPAAGCATPTEKEFPQTHSDPSSEQQNRKSQPGTNGGSVKL. At T168 the chain carries Phosphothreonine. Positions 176–193 are enriched in polar residues; the sequence is QTHSDPSSEQQNRKSQPG. Phosphoserine is present on residues S221, S229, S243, and S284. Residues K294 and K310 each participate in a glycyl lysine isopeptide (Lys-Gly) (interchain with G-Cter in SUMO); alternate cross-link. Glycyl lysine isopeptide (Lys-Gly) (interchain with G-Cter in SUMO2); alternate cross-links involve residues K294 and K310. Phosphoserine is present on residues S324 and S421. The nuclear receptor DNA-binding region spans 434–509; sequence PKLCLVCSDE…AGMNLEARKT (76 aa). Residue K435 forms a Glycyl lysine isopeptide (Lys-Gly) (interchain with G-Cter in ubiquitin) linkage. NR C4-type zinc fingers lie at residues 437–457 and 473–497; these read CLVCSDEASGCHYGVLTCGSC and CAGRNDCIIDKIRRKNCPACRYRKC. N6-acetyllysine is present on residues K496, K508, K510, and K511. The interval 501 to 792 is interaction with CLOCK; it reads GMNLEARKTK…NIKKLLFHQK (292 aa). The interval 503-538 is hinge; it reads NLEARKTKKKIKGIQQATAGVSQDTSENANKTIVPA. Residues 539 to 773 enclose the NR LBD domain; the sequence is ALPQLTPTLV…FPEMLAEIIT (235 aa). The segment at 547 to 712 is interaction with CRY1; that stretch reads LVSLLEVIEP…EIRMTYIKEL (166 aa). Residue K718 forms a Glycyl lysine isopeptide (Lys-Gly) (interchain with G-Cter in SUMO) linkage.

The protein belongs to the nuclear hormone receptor family. NR3 subfamily. As to quaternary structure, heteromultimeric cytoplasmic complex with HSP90AA1, HSPA1A/HSPA1B, and FKBP5 or another immunophilin such as PPID, STIP1, or the immunophilin homolog PPP5C. Upon ligand binding FKBP5 dissociates from the complex and FKBP4 takes its place, thereby linking the complex to dynein and mediating transport to the nucleus, where the complex dissociates. Probably forms a complex composed of chaperones HSP90 and HSP70, co-chaperones CDC37, PPP5C, TSC1 and client protein TSC2, CDK4, AKT, RAF1 and NR3C1; this complex does not contain co-chaperones STIP1/HOP and PTGES3/p23. Directly interacts with UNC45A. Binds to DNA as a homodimer, and as heterodimer with NR3C2 or the retinoid X receptor. Binds STAT5A and STAT5B homodimers and heterodimers. Interacts with NRIP1, POU2F1, POU2F2 and TRIM28. Interacts with several coactivator complexes, including the SMARCA4 complex, CREBBP/EP300, TADA2L (Ada complex) and p160 coactivators such as NCOA2 and NCOA6. Interaction with BAG1 inhibits transactivation. Interacts with HEXIM1 and TGFB1I1. Interacts with NCOA1. Interacts with NCOA3, SMARCA4, SMARCC1, SMARCD1, and SMARCE1. Interacts with CLOCK, CRY1 and CRY2 in a ligand-dependent fashion. Interacts with CIART. Interacts with RWDD3. Interacts with UBE2I/UBC9 and this interaction is enhanced in the presence of RWDD3. Interacts with GRIP1. Interacts with NR4A3 (via nuclear receptor DNA-binding domain), represses transcription activity of NR4A3 on the POMC promoter Nur response element (NurRE). Directly interacts with PNRC2 to attract and form a complex with UPF1 and DCP1A; the interaction leads to rapid mRNA degradation. Interacts with GSK3B. Interacts with FNIP1 and FNIP2. Interacts (via C-terminus) with HNRNPU (via C-terminus). Interacts with MCM3AP. Interacts (via domain NR LBD) with HSP90AA1 and HSP90AB1. In the absence of hormonal ligand, interacts with TACC1. Interacts (via NR LBD domain) with ZNF764 (via KRAB domain); the interaction regulates transcription factor activity of NR3C1 by directing its actions toward certain biologic pathways. Acetylation by CLOCK reduces its binding to glucocorticoid response elements and its transcriptional activity. In terms of processing, increased proteasome-mediated degradation in response to glucocorticoids. Post-translationally, phosphorylated in the absence of hormone; becomes hyperphosphorylated in the presence of glucocorticoids. Phosphorylated in the absence of hormone; becomes hyperphosphorylated in the presence of glucocorticoid. The Ser-221, Ser-243 and Ser-421-phosphorylated forms are mainly cytoplasmic, and the Ser-229-phosphorylated form is nuclear. Phosphorylation at Ser-229 increases transcriptional activity. Phosphorylation at Ser-221, Ser-243 and Ser-421 decreases signaling capacity. Phosphorylation at Ser-421 may protect from glucocorticoid-induced apoptosis. Phosphorylation at Ser-221 and Ser-229 is not required in regulation of chromosome segregation. May be dephosphorylated by PPP5C, attenuates NR3C1 action. Sumoylation at Lys-294 and Lys-310 negatively regulates its transcriptional activity. Sumoylation at Lys-718 positively regulates its transcriptional activity in the presence of RWDD3. Sumoylation at Lys-294 and Lys-310 is dispensable whereas sumoylation at Lys-718 is critical for the stimulatory effect of RWDD3 on its transcriptional activity. Heat shock increases sumoylation in a RWDD3-dependent manner. In terms of processing, ubiquitinated. Ubiquitination by UBR5 leads to its degradation: UBR5 specifically recognizes and binds ligand-bound NR3C1 when it is not associated with coactivators (NCOAs). In presence of NCOAs, the UBR5-degron is not accessible, preventing its ubiquitination and degradation. As to expression, expressed in spleen, kidney and liver. Expressed in a circadian manner in the liver. Expressed at highest level in spleen with lesser amounts in kidney and liver.

Its subcellular location is the cytoplasm. It is found in the nucleus. The protein localises to the mitochondrion. It localises to the cytoskeleton. The protein resides in the spindle. Its subcellular location is the microtubule organizing center. It is found in the centrosome. The protein localises to the chromosome. It localises to the nucleoplasm. In terms of biological role, receptor for glucocorticoids (GC). Has a dual mode of action: as a transcription factor that binds to glucocorticoid response elements (GRE), both for nuclear and mitochondrial DNA, and as a modulator of other transcription factors. Affects inflammatory responses, cellular proliferation and differentiation in target tissues. Involved in chromatin remodeling. Plays a role in rapid mRNA degradation by binding to the 5' UTR of target mRNAs and interacting with PNRC2 in a ligand-dependent manner which recruits the RNA helicase UPF1 and the mRNA-decapping enzyme DCP1A, leading to RNA decay. Could act as a coactivator for STAT5-dependent transcription upon growth hormone (GH) stimulation and could reveal an essential role of hepatic GR in the control of body growth. Functionally, has transcriptional activation and repression activity. Mediates glucocorticoid-induced apoptosis. Promotes accurate chromosome segregation during mitosis. May act as a tumor suppressor. May play a negative role in adipogenesis through the regulation of lipolytic and antilipogenic gene expression. Acts as a dominant negative inhibitor of isoform 1. Has intrinsic transcriptional activity independent of isoform Alpha when both isoforms are coexpressed. Loses this transcription modulator function on its own. Has no hormone-binding activity. May play a role in controlling glucose metabolism by maintaining insulin sensitivity. Reduces hepatic gluconeogenesis through down-regulation of PEPCK in an isoform Alpha-dependent manner. Directly regulates STAT1 expression in isoform Alpha-independent manner. The polypeptide is Glucocorticoid receptor (Nr3c1) (Mus musculus (Mouse)).